A 593-amino-acid chain; its full sequence is Methionine--tRNA ligase, mitochondrial (593 aa).

The N-terminal 29 residues, M1 to Y29, are a transit peptide targeting the mitochondrion. The short motif at F52–H62 is the 'HIGH' region element. The 'KMSKS' region motif lies at K347 to S351. Residue K350 coordinates ATP.

Belongs to the class-I aminoacyl-tRNA synthetase family.

It is found in the mitochondrion matrix. The enzyme catalyses tRNA(Met) + L-methionine + ATP = L-methionyl-tRNA(Met) + AMP + diphosphate. The polypeptide is Methionine--tRNA ligase, mitochondrial (MARS2) (Bos taurus (Bovine)).